Here is a 46-residue protein sequence, read N- to C-terminus: Escargot/snail protein homolog (46 aa).

3 C2H2-type zinc fingers span residues 1–4, 9–30, and 36–46; these read HIAH, CKCPICGKPFAPWLLQGHIRTH, and SVCQHCNRAFA.

This sequence belongs to the snail C2H2-type zinc-finger protein family.

It localises to the nucleus. This Lithobius forficatus (Centipede) protein is Escargot/snail protein homolog.